The following is a 213-amino-acid chain: Na(+)-translocating NADH-quinone reductase subunit E (213 aa).

The next 6 membrane-spanning stretches (helical) occupy residues 12 to 32, 40 to 60, 92 to 112, 124 to 144, 155 to 175, and 191 to 211; these read AVFV…FLAV, IGLG…NQLI, FLGF…LEMF, LGIF…SLFM, VVFG…LAGI, and LGIT…FSGI.

Belongs to the NqrDE/RnfAE family. Composed of six subunits; NqrA, NqrB, NqrC, NqrD, NqrE and NqrF.

The protein resides in the cell inner membrane. It catalyses the reaction a ubiquinone + n Na(+)(in) + NADH + H(+) = a ubiquinol + n Na(+)(out) + NAD(+). NQR complex catalyzes the reduction of ubiquinone-1 to ubiquinol by two successive reactions, coupled with the transport of Na(+) ions from the cytoplasm to the periplasm. NqrA to NqrE are probably involved in the second step, the conversion of ubisemiquinone to ubiquinol. This Rhodopirellula baltica (strain DSM 10527 / NCIMB 13988 / SH1) protein is Na(+)-translocating NADH-quinone reductase subunit E.